The following is a 306-amino-acid chain: Mitochondrial glycine transporter (306 aa).

Solcar repeat units follow at residues 25 to 114 (QPVI…LKQY), 121 to 205 (PTAL…TKNV), and 217 to 301 (LVPV…MMAK). 6 helical membrane-spanning segments follow: residues 31–56 (FLCG…TRLQ), 89–115 (GMSP…KQYF), 127–152 (VILG…TRYE), 180–203 (GLTA…SQTK), 221–247 (VNFS…KTHM), and 276–294 (GSVP…AWTV).

This sequence belongs to the mitochondrial carrier (TC 2.A.29) family. SLC25A38 subfamily.

The protein resides in the mitochondrion inner membrane. The catalysed reaction is glycine(in) = glycine(out). Its function is as follows. Mitochondrial glycine transporter that imports glycine into the mitochondrial matrix. Plays an important role in providing glycine for the first enzymatic step in heme biosynthesis, the condensation of glycine with succinyl-CoA to produce 5-aminolevulinate (ALA) in the mitochondrial matrix. Required during erythropoiesis. Functionally, plays a role as pro-apoptotic protein that induces caspase-dependent apoptosis. The polypeptide is Mitochondrial glycine transporter (Ovis aries (Sheep)).